Reading from the N-terminus, the 87-residue chain is Small ribosomal subunit protein bS20 (87 aa).

A disordered region spans residues 1–22 (MANSPQAKKRARQNEKRFAINK).

The protein belongs to the bacterial ribosomal protein bS20 family.

Functionally, binds directly to 16S ribosomal RNA. In Ruegeria sp. (strain TM1040) (Silicibacter sp.), this protein is Small ribosomal subunit protein bS20.